The primary structure comprises 708 residues: Meiotic sister-chromatid recombination protein 6, mitochondrial (708 aa).

The N-terminal 15 residues, 1–15 (MLSVRISARQCSVRG), are a transit peptide targeting the mitochondrion. Positions 19–36 (QANNVSQPAKDNATNGSD) are enriched in polar residues. The tract at residues 19-44 (QANNVSQPAKDNATNGSDAATEKKGT) is disordered.

The protein resides in the mitochondrion. In terms of biological role, may be involved in the control of meiotic sister-chromatid recombination. The chain is Meiotic sister-chromatid recombination protein 6, mitochondrial (MSC6) from Kluyveromyces lactis (strain ATCC 8585 / CBS 2359 / DSM 70799 / NBRC 1267 / NRRL Y-1140 / WM37) (Yeast).